The sequence spans 312 residues: Homeobox-leucine zipper protein ATHB-5 (312 aa).

A disordered region spans residues 1 to 33; sequence MKRSRGSSDSLSGFLPIRHSTTDKQISPRPTTT. A compositionally biased stretch (polar residues) spans 23-33; sequence DKQISPRPTTT. The homeobox DNA-binding region spans 69–128; that stretch reads AAEKKRRLGVEQVKALEKNFEIDNKLEPERKVKLAQELGLQPRQVAIWFQNRRARWKTKQ. The leucine-zipper stretch occupies residues 129–164; it reads LERDYGVLKSNFDALKRNRDSLQRDNDSLLGQIKEL.

It belongs to the HD-ZIP homeobox family. Class I subfamily. In terms of assembly, interacts with DNA as homodimer. As to expression, widely expressed.

The protein resides in the nucleus. Its function is as follows. Probable transcription factor that acts as a positive regulator of ABA-responsiveness, mediating the inhibitory effect of ABA on growth during seedling establishment. Binds to the DNA sequence 5'-CAATNATTG-3'. The protein is Homeobox-leucine zipper protein ATHB-5 (ATHB-5) of Arabidopsis thaliana (Mouse-ear cress).